The following is a 152-amino-acid chain: D-aminoacyl-tRNA deacylase (152 aa).

The Gly-cisPro motif, important for rejection of L-amino acids motif lies at 142–143 (GP).

It belongs to the DTD family. As to quaternary structure, homodimer.

It localises to the cytoplasm. It catalyses the reaction glycyl-tRNA(Ala) + H2O = tRNA(Ala) + glycine + H(+). It carries out the reaction a D-aminoacyl-tRNA + H2O = a tRNA + a D-alpha-amino acid + H(+). Its function is as follows. An aminoacyl-tRNA editing enzyme that deacylates mischarged D-aminoacyl-tRNAs. Also deacylates mischarged glycyl-tRNA(Ala), protecting cells against glycine mischarging by AlaRS. Acts via tRNA-based rather than protein-based catalysis; rejects L-amino acids rather than detecting D-amino acids in the active site. By recycling D-aminoacyl-tRNA to D-amino acids and free tRNA molecules, this enzyme counteracts the toxicity associated with the formation of D-aminoacyl-tRNA entities in vivo and helps enforce protein L-homochirality. The polypeptide is D-aminoacyl-tRNA deacylase (Burkholderia cenocepacia (strain HI2424)).